An 874-amino-acid chain; its full sequence is Oxysterol-binding protein-related protein 5 (874 aa).

The segment at 1-71 is disordered; sequence MKEEAFLRRR…PQTPGSATKV (71 aa). Serine 12 is modified (phosphoserine). The stretch at 93 to 123 forms a coiled coil; sequence VSKKDALKAQKENYRQEKKRATKQLFSALTD. The PH domain maps to 126–243; sequence VVIMADSLKI…WLDALELALR (118 aa). Disordered regions lie at residues 255–277 and 299–338; these read QGRD…GLPT and FSDK…GPWR. Over residues 261 to 277 the composition is skewed to polar residues; it reads QGSSPDASPSSLYGLPT. The segment covering 299 to 308 has biased composition (basic and acidic residues); that stretch reads FSDKSERENA. Residues 383 to 388, 445 to 448, and 477 to 478 each bind a 1,2-diacyl-sn-glycero-3-phospho-(1D-myo-inositol 4-phosphate); these read LSRVVL, KPYN, and HH. Residues 383-388 and asparagine 448 each bind a 1,2-diacyl-sn-glycero-3-phospho-L-serine; that span reads LSRVVL. Serine 503 lines the a 1,2-diacyl-sn-glycero-3-phospho-L-serine pocket. A compositionally biased stretch (basic and acidic residues) spans 660–684; sequence GDQHKATQEKSVLEEAQRQRAREHQ. 2 disordered regions span residues 660–685 and 739–798; these read GDQH…EHQQ and GQTT…GGES. The a 1,2-diacyl-sn-glycero-3-phospho-(1D-myo-inositol 4-phosphate) site is built by lysine 669, glutamate 673, and arginine 677. 2 positions are modified to phosphoserine: serine 746 and serine 749. A compositionally biased stretch (basic and acidic residues) spans 754 to 764; it reads PSSDRRLRKAS. Positions 765–782 are enriched in polar residues; sequence DQPSGHSQVTESSGSTPE. The helical transmembrane segment at 855–873 threads the bilayer; it reads SWFLLCIFLTCQLFINYIL.

The protein belongs to the OSBP family.

It is found in the endoplasmic reticulum membrane. Functionally, lipid transporter involved in lipid countertransport between the endoplasmic reticulum and the plasma membrane: specifically exchanges phosphatidylserine with phosphatidylinositol 4-phosphate (PI4P), delivering phosphatidylserine to the plasma membrane in exchange for PI4P, which is degraded by the SAC1/SACM1L phosphatase in the endoplasmic reticulum. Binds phosphatidylserine and PI4P in a mutually exclusive manner. May cooperate with NPC1 to mediate the exit of cholesterol from endosomes/lysosomes. Binds 25-hydroxycholesterol and cholesterol. This chain is Oxysterol-binding protein-related protein 5 (Osbpl5), found in Mus musculus (Mouse).